The chain runs to 427 residues: Diaminobutyrate--2-oxoglutarate transaminase (427 aa).

N6-(pyridoxal phosphate)lysine is present on Lys-269.

The protein belongs to the class-III pyridoxal-phosphate-dependent aminotransferase family. It depends on pyridoxal 5'-phosphate as a cofactor.

The catalysed reaction is L-2,4-diaminobutanoate + 2-oxoglutarate = L-aspartate 4-semialdehyde + L-glutamate. The protein operates within amine and polyamine biosynthesis; ectoine biosynthesis; L-ectoine from L-aspartate 4-semialdehyde: step 1/3. Functionally, catalyzes reversively the conversion of L-aspartate beta-semialdehyde (ASA) to L-2,4-diaminobutyrate (DABA) by transamination with L-glutamate. This is Diaminobutyrate--2-oxoglutarate transaminase (ectB) from Halalkalibacterium halodurans (strain ATCC BAA-125 / DSM 18197 / FERM 7344 / JCM 9153 / C-125) (Bacillus halodurans).